We begin with the raw amino-acid sequence, 370 residues long: MSALHSLRTHAVSIRAVRKVYGDPESGPVALKRVDLDIRDNEFFTLLGPSGCGKTTLLRMIAGFEFPTEGEILLYGENIAARPPFERPVNTVFQHYALFPHMSIAENLAFGLESRPLGRSLGKAEIAERVREMLALVQMERFADRRPGQLSGGQQQRVALARALAPQPRVLLLDEPLSALDLKLRQAMREELKAIQAKTGITFIFVTHDQEEALTMSDRIAVLSEGQVQQVGPPEEIYERPGNRFVADFIGETNFIEAELLQRDGPLALYRGPGGEAFEAAARDGLAAGARVCLSIRPERLDLLAANTGGGLPCTVESQVYLGTDLQYRVRLADGSLLTVRTPNGTARRFATGEAACLAVAKDSASVLLD.

An ABC transporter domain is found at 12–250 (VSIRAVRKVY…PGNRFVADFI (239 aa)). 48–55 (GPSGCGKT) contributes to the ATP binding site.

This sequence belongs to the ABC transporter superfamily. Spermidine/putrescine importer (TC 3.A.1.11.1) family. The complex is composed of two ATP-binding proteins (PotA), two transmembrane proteins (PotB and PotC) and a solute-binding protein (PotD).

The protein localises to the cell inner membrane. The enzyme catalyses ATP + H2O + polyamine-[polyamine-binding protein]Side 1 = ADP + phosphate + polyamineSide 2 + [polyamine-binding protein]Side 1.. Its function is as follows. Part of the ABC transporter complex PotABCD involved in spermidine/putrescine import. Responsible for energy coupling to the transport system. The protein is Spermidine/putrescine import ATP-binding protein PotA 1 of Pseudomonas aeruginosa (strain ATCC 15692 / DSM 22644 / CIP 104116 / JCM 14847 / LMG 12228 / 1C / PRS 101 / PAO1).